The following is a 267-amino-acid chain: 2-keto-3-deoxy-L-rhamnonate aldolase (267 aa).

His49 (proton acceptor) is an active-site residue. Gln151 contributes to the substrate binding site. Glu153 contributes to the Mg(2+) binding site. The substrate site is built by Ala178 and Asp179. Asp179 serves as a coordination point for Mg(2+).

It belongs to the HpcH/HpaI aldolase family. KDR aldolase subfamily. As to quaternary structure, homohexamer. Requires Mg(2+) as cofactor.

It carries out the reaction 2-dehydro-3-deoxy-L-rhamnonate = (S)-lactaldehyde + pyruvate. Its function is as follows. Catalyzes the reversible retro-aldol cleavage of 2-keto-3-deoxy-L-rhamnonate (KDR) to pyruvate and lactaldehyde. This chain is 2-keto-3-deoxy-L-rhamnonate aldolase, found in Salmonella paratyphi A (strain ATCC 9150 / SARB42).